We begin with the raw amino-acid sequence, 424 residues long: Glutamate-1-semialdehyde 2,1-aminomutase (424 aa).

K263 carries the N6-(pyridoxal phosphate)lysine modification.

This sequence belongs to the class-III pyridoxal-phosphate-dependent aminotransferase family. HemL subfamily. In terms of assembly, homodimer. Pyridoxal 5'-phosphate is required as a cofactor.

Its subcellular location is the cytoplasm. It catalyses the reaction (S)-4-amino-5-oxopentanoate = 5-aminolevulinate. Its pathway is porphyrin-containing compound metabolism; protoporphyrin-IX biosynthesis; 5-aminolevulinate from L-glutamyl-tRNA(Glu): step 2/2. The chain is Glutamate-1-semialdehyde 2,1-aminomutase from Campylobacter jejuni subsp. jejuni serotype O:23/36 (strain 81-176).